Here is a 505-residue protein sequence, read N- to C-terminus: Deoxyguanosinetriphosphate triphosphohydrolase (505 aa).

An HD domain is found at 66-273 (RLTHSMEVQQ…MEAADDISYC (208 aa)).

This sequence belongs to the dGTPase family. Type 1 subfamily. As to quaternary structure, homotetramer. The cofactor is Mg(2+).

It carries out the reaction dGTP + H2O = 2'-deoxyguanosine + triphosphate + H(+). In terms of biological role, dGTPase preferentially hydrolyzes dGTP over the other canonical NTPs. This is Deoxyguanosinetriphosphate triphosphohydrolase from Serratia proteamaculans (strain 568).